Here is a 437-residue protein sequence, read N- to C-terminus: Sperm-associated antigen 4 protein (437 aa).

Low complexity predominate over residues 1 to 12 (MRRSSRPGSASS). Residues 1-88 (MRRSSRPGSA…KPAPRSHNWQ (88 aa)) form a disordered region. Polar residues-rich tracts occupy residues 19–31 (NFFS…SITS) and 72–88 (WAGS…HNWQ). 2 helical membrane passes run 135-155 (FLSL…DVLV) and 166-186 (FLFT…LGLL). The stretch at 197–244 (KEMLTLSEYHERVRSQGQQLQQLQAELDKLHKEVSTVRAANSERVAKL) forms a coiled coil. In terms of domain architecture, SUN spans 265 to 425 (GASIDLQKTS…YRVRAHGVRT (161 aa)).

Homodimer. Interacts with ODF1. May associate with microtubules. Interacts with SUN3 and SYNE1; suggesting the formation of a spermatogenesis-specific LINC complex; a SUN domain-based heterotrimer with SUN3 may associate with SYNE1. Interacts with SEPT12 and LMNB1; during spermatogenesis. In terms of tissue distribution, predominantly epressed in testis. Expressed in ejaculated spermatozoa (at protein level).

The protein resides in the membrane. Its subcellular location is the cytoplasm. It localises to the cytoskeleton. It is found in the flagellum axoneme. The protein localises to the nucleus envelope. The protein resides in the nucleus inner membrane. Its function is as follows. Involved in spermatogenesis. Required for sperm head formation but not required to establish and maintain general polarity of the sperm head. Required for anchoring and organization of the manchette. Required for targeting of SUN3 and probably SYNE1 through a probable SUN1:SYNE3 LINC complex to the nuclear envelope and involved in accurate posterior sperm head localization of the complex. May anchor SUN3 the nuclear envelope. Involved in maintenance of the nuclear envelope integrity. May assist the organization and assembly of outer dense fibers (ODFs), a specific structure of the sperm tail. This is Sperm-associated antigen 4 protein (SPAG4) from Homo sapiens (Human).